The chain runs to 581 residues: Protein alan shepard (581 aa).

Residues 1 to 10 (MHPRYSPAPP) are compositionally biased toward pro residues. The tract at residues 1 to 73 (MHPRYSPAPP…AVTAAPPTPR (73 aa)) is disordered. The residue at position 5 (tyrosine 5) is a Phosphotyrosine. Over residues 35-54 (ANNSQQLPPQMPRSQNYANG) the composition is skewed to polar residues. Over residues 55–68 (SSSSAAAASAVTAA) the composition is skewed to low complexity. Tyrosine 128 and tyrosine 146 each carry phosphotyrosine. Over residues 168 to 226 (PATTTYGQRVPTAASPSNTNSSSSSNTGSQSGTLSTSLSHTTNTNTNMGPNGTAQNQNQ) the composition is skewed to low complexity. The segment at 168–234 (PATTTYGQRV…NQQGGGGEQL (67 aa)) is disordered. RRM domains follow at residues 237 to 310 (TNLY…MAKQ) and 316 to 395 (TNLY…FADG). A disordered region spans residues 555–581 (MTDSEQASTAASPDEAYTQYPHQAAPK).

Functionally, has a role in the perception of gravity. This chain is Protein alan shepard, found in Drosophila willistoni (Fruit fly).